Here is a 91-residue protein sequence, read N- to C-terminus: C-C motif chemokine 5 (91 aa).

An N-terminal signal peptide occupies residues 1–23 (MKVSATAFAVLLMAAALCAPASA). Cystine bridges form between C33–C57 and C34–C73.

This sequence belongs to the intercrine beta (chemokine CC) family.

The protein localises to the secreted. Functionally, chemoattractant for blood monocytes, memory T-helper cells and eosinophils. Causes the release of histamine from basophils and activates eosinophils. May activate several chemokine receptors including CCR1, CCR3, CCR4 and CCR5. May also be an agonist of the G protein-coupled receptor GPR75. Together with GPR75, may play a role in neuron survival through activation of a downstream signaling pathway involving the PI3, Akt and MAP kinases. By activating GPR75 may also play a role in insulin secretion by islet cells. This chain is C-C motif chemokine 5 (CCL5), found in Bos taurus (Bovine).